A 35-amino-acid chain; its full sequence is Cupiennin-2d (35 aa).

Q35 is modified (glutamine amide).

In terms of tissue distribution, expressed by the venom gland.

It localises to the secreted. This Cupiennius salei (American wandering spider) protein is Cupiennin-2d.